The primary structure comprises 388 residues: Putative C-&gt;U-editing enzyme APOBEC-4 (388 aa).

Residues 60-176 form the CMP/dCMP-type deaminase domain; that stretch reads PQTKHLTFYE…AWNREALRGL (117 aa). Histidine 92 provides a ligand contact to Zn(2+). Glutamate 94 (proton donor) is an active-site residue. The Zn(2+) site is built by cysteine 126 and cysteine 133. The interval 322-356 is disordered; that stretch reads KVKALRKSPSGRPVKKEEARKGSTRSQEANETNKS.

Belongs to the cytidine and deoxycytidylate deaminase family. Zn(2+) serves as cofactor.

In terms of biological role, putative C to U editing enzyme whose physiological substrate is not yet known. This Rattus norvegicus (Rat) protein is Putative C-&gt;U-editing enzyme APOBEC-4 (Apobec4).